Consider the following 680-residue polypeptide: UvrABC system protein B (680 aa).

The Helicase ATP-binding domain maps to 27-192 (SNIEAGVTDQ…ERNDYDFHRG (166 aa)). 40 to 47 (GVTGSGKT) lines the ATP pocket. Residues 93–116 (YYDYYQPEAYVPSSDTYIEKDSSI) carry the Beta-hairpin motif. The Helicase C-terminal domain occupies 432 to 594 (QVDDLLGECR…IVPATIRKAV (163 aa)). A UVR domain is found at 637 to 672 (AKQIQQLERDMREAAKELEFERAAELRDRIRLLREH).

It belongs to the UvrB family. As to quaternary structure, forms a heterotetramer with UvrA during the search for lesions. Interacts with UvrC in an incision complex.

Its subcellular location is the cytoplasm. Its function is as follows. The UvrABC repair system catalyzes the recognition and processing of DNA lesions. A damage recognition complex composed of 2 UvrA and 2 UvrB subunits scans DNA for abnormalities. Upon binding of the UvrA(2)B(2) complex to a putative damaged site, the DNA wraps around one UvrB monomer. DNA wrap is dependent on ATP binding by UvrB and probably causes local melting of the DNA helix, facilitating insertion of UvrB beta-hairpin between the DNA strands. Then UvrB probes one DNA strand for the presence of a lesion. If a lesion is found the UvrA subunits dissociate and the UvrB-DNA preincision complex is formed. This complex is subsequently bound by UvrC and the second UvrB is released. If no lesion is found, the DNA wraps around the other UvrB subunit that will check the other stand for damage. The sequence is that of UvrABC system protein B from Nitratidesulfovibrio vulgaris (strain DSM 19637 / Miyazaki F) (Desulfovibrio vulgaris).